A 110-amino-acid chain; its full sequence is Large ribosomal subunit protein uL22 (110 aa).

Belongs to the universal ribosomal protein uL22 family. Part of the 50S ribosomal subunit.

In terms of biological role, this protein binds specifically to 23S rRNA; its binding is stimulated by other ribosomal proteins, e.g. L4, L17, and L20. It is important during the early stages of 50S assembly. It makes multiple contacts with different domains of the 23S rRNA in the assembled 50S subunit and ribosome. Functionally, the globular domain of the protein is located near the polypeptide exit tunnel on the outside of the subunit, while an extended beta-hairpin is found that lines the wall of the exit tunnel in the center of the 70S ribosome. The sequence is that of Large ribosomal subunit protein uL22 from Histophilus somni (strain 129Pt) (Haemophilus somnus).